The chain runs to 142 residues: Large ribosomal subunit protein uL16 (142 aa).

Belongs to the universal ribosomal protein uL16 family. In terms of assembly, part of the 50S ribosomal subunit.

Its function is as follows. Binds 23S rRNA and is also seen to make contacts with the A and possibly P site tRNAs. The chain is Large ribosomal subunit protein uL16 from Thermosipho melanesiensis (strain DSM 12029 / CIP 104789 / BI429).